The primary structure comprises 205 residues: Listeria nuclear targeted protein A (205 aa).

Positions 1-36 (MKKLVAWFNGLSKMWKVVVIIGAVFVVIIALTTGED) are cleaved as a signal peptide.

Interacts specifically with host BAHD1.

Its subcellular location is the secreted. The protein resides in the host nucleus. Its function is as follows. Relieves the repression of host cell immune response genes (interferon-stimulated genes) by blocking the recruitment of host BAHD1 to these genes. May modulate interferon-mediated immune response to control bacterial colonization of the host. This chain is Listeria nuclear targeted protein A (lntA), found in Listeria monocytogenes serovar 1/2a (strain ATCC BAA-679 / EGD-e).